The following is a 951-amino-acid chain: MEKTYNPQDIEQPLYEHWEKQGYFKPNGDESQESFCIMIPPPNVTGSLHMGHAFQQTIMDTMIRYQRMQGKNTLWQVGTDHAGIATQMVVERKIAAEEGKTRHDYGREAFIDKIWEWKAESGGTITRQMRRLGNSVDWERERFTMDEGLSNAVKEVFVRLYKEDLIYRGKRLVNWDPKLRTAISDLEVENRESKGSMWHIRYPLADGAKTADGKDYLVVATTRPETLLGDTGVAVNPEDPRYKDLIGKYVILPLVNRRIPIVGDEHADMEKGTGCVKITPAHDFNDYEVGKRHALPMINILTFDGDIRESAQVFDTKGNESDVYSSEIPAEFQKLERFAARKAVVAAVDALGLLEEIKPHDLTVPYGDRGGVVIEPMLTDQWYVRADVLAKPAVEAVENGDIQFVPKQYENMYFSWMRDIQDWCISRQLWWGHRIPAWYDEAGNVYVGRNEEEVRKENNLGANVALRQDEDVLDTWFSSALWTFSTLGWPENTDALRQFHPTSVMVSGFDIIFFWIARMIMMTMHFIKDENGKPQVPFHTVYMTGLIRDDEGQKMSKSKGNVIDPLDMVDGISLPELLEKRTGNMMQPQLADKIRKRTEKQFPNGIEPHGTDALRFTLAALASTGRDINWDMKRLEGYRNFCNKLWNASRFVLMNTEGQDCGFNGGEMTLSLADRWILAEFNQTIKAYREALDSFRFDIAAGILYEFTWNQFCDWYLELTKPVMNGGTEAELRGTRHTLVTVLEGLLRLAHPIIPFITETIWQRVKVLCGITADTIMLQPFPQYDASQVDEAALADTEWLKQAIVAVRNIRAEMNIAPGKPLELLLRGCSADAERRVNENRGFLQTLARLESITVLPADDKGPVSVTKIIDGAELLIPMAGLINKEDELARLAKEVAKIEGEISRIENKLANEGFVARAPEAVIAKEREKLEGYAEAKAKLIEQQAVIAAL.

The short motif at proline 42–histidine 52 is the 'HIGH' region element. The 'KMSKS' region motif lies at lysine 554–serine 558. Residue lysine 557 coordinates ATP. A coiled-coil region spans residues alanine 880–glutamine 944.

The protein belongs to the class-I aminoacyl-tRNA synthetase family. ValS type 1 subfamily. As to quaternary structure, monomer.

The protein localises to the cytoplasm. The enzyme catalyses tRNA(Val) + L-valine + ATP = L-valyl-tRNA(Val) + AMP + diphosphate. Functionally, catalyzes the attachment of valine to tRNA(Val). As ValRS can inadvertently accommodate and process structurally similar amino acids such as threonine, to avoid such errors, it has a 'posttransfer' editing activity that hydrolyzes mischarged Thr-tRNA(Val) in a tRNA-dependent manner. The polypeptide is Valine--tRNA ligase (Shigella flexneri).